The primary structure comprises 45 residues: Large ribosomal subunit protein bL34 (45 aa).

Belongs to the bacterial ribosomal protein bL34 family.

In Salinispora tropica (strain ATCC BAA-916 / DSM 44818 / JCM 13857 / NBRC 105044 / CNB-440), this protein is Large ribosomal subunit protein bL34.